Consider the following 265-residue polypeptide: Thiazole synthase (265 aa).

The Schiff-base intermediate with DXP role is filled by Lys103. 1-deoxy-D-xylulose 5-phosphate is bound by residues Gly164, 190–191 (AG), and 212–213 (NT).

It belongs to the ThiG family. Homotetramer. Forms heterodimers with either ThiH or ThiS.

The protein localises to the cytoplasm. The catalysed reaction is [ThiS sulfur-carrier protein]-C-terminal-Gly-aminoethanethioate + 2-iminoacetate + 1-deoxy-D-xylulose 5-phosphate = [ThiS sulfur-carrier protein]-C-terminal Gly-Gly + 2-[(2R,5Z)-2-carboxy-4-methylthiazol-5(2H)-ylidene]ethyl phosphate + 2 H2O + H(+). Its pathway is cofactor biosynthesis; thiamine diphosphate biosynthesis. Its function is as follows. Catalyzes the rearrangement of 1-deoxy-D-xylulose 5-phosphate (DXP) to produce the thiazole phosphate moiety of thiamine. Sulfur is provided by the thiocarboxylate moiety of the carrier protein ThiS. In vitro, sulfur can be provided by H(2)S. The sequence is that of Thiazole synthase from Bordetella pertussis (strain Tohama I / ATCC BAA-589 / NCTC 13251).